The sequence spans 540 residues: Bifunctional pantoate ligase/cytidylate kinase (540 aa).

Residues 1–280 (MQWLRTVAAL…VGQTRLIDNL (280 aa)) form a pantoate--beta-alanine ligase region. Residue 28 to 35 (MGSLHEGH) coordinates ATP. Residue His35 is the Proton donor of the active site. Residue Gln59 participates in (R)-pantoate binding. Position 59 (Gln59) interacts with beta-alanine. 150–153 (GQKD) provides a ligand contact to ATP. Residue Gln156 coordinates (R)-pantoate. ATP is bound by residues Val179 and 187 to 190 (YSSR). The cytidylate kinase stretch occupies residues 281–540 (LLSPEGVDPL…RSGAAHFDII (260 aa)). Positions 288 to 307 (DPLPQEQQSAVPPSPKRGRR) are disordered.

The protein in the N-terminal section; belongs to the pantothenate synthetase family. In the C-terminal section; belongs to the cytidylate kinase family. Type 1 subfamily.

It localises to the cytoplasm. The enzyme catalyses (R)-pantoate + beta-alanine + ATP = (R)-pantothenate + AMP + diphosphate + H(+). It catalyses the reaction CMP + ATP = CDP + ADP. It carries out the reaction dCMP + ATP = dCDP + ADP. It functions in the pathway cofactor biosynthesis; (R)-pantothenate biosynthesis; (R)-pantothenate from (R)-pantoate and beta-alanine: step 1/1. In terms of biological role, catalyzes the condensation of pantoate with beta-alanine in an ATP-dependent reaction via a pantoyl-adenylate intermediate. Its function is as follows. Catalyzes the transfer of a phosphate group from ATP to either CMP or dCMP to form CDP or dCDP and ADP, respectively. This is Bifunctional pantoate ligase/cytidylate kinase from Synechococcus sp. (strain JA-3-3Ab) (Cyanobacteria bacterium Yellowstone A-Prime).